Reading from the N-terminus, the 201-residue chain is MELVLKDAQSALTVSETTFGRDFNEALVHQVVVAYAAGARQGSRGQKTRAEVTGSGKKPWRQKGTGRARSGSVKSPIWRSGGVTFAAKPQDHSQKVNKKMYRGALKSILSELVRQDRLIVVEQFSVKAPKTKLLAQKLKDMALEDVLIITGELDENLFLAARNLYKVDVRDANGIDPVSLIAFDKVVMTADAVKQVEEMLA.

A disordered region spans residues 43-73; sequence SRGQKTRAEVTGSGKKPWRQKGTGRARSGSV.

It belongs to the universal ribosomal protein uL4 family. As to quaternary structure, part of the 50S ribosomal subunit.

Functionally, one of the primary rRNA binding proteins, this protein initially binds near the 5'-end of the 23S rRNA. It is important during the early stages of 50S assembly. It makes multiple contacts with different domains of the 23S rRNA in the assembled 50S subunit and ribosome. In terms of biological role, forms part of the polypeptide exit tunnel. The sequence is that of Large ribosomal subunit protein uL4 from Sodalis glossinidius (strain morsitans).